A 130-amino-acid chain; its full sequence is Small ribosomal subunit protein uS8 (130 aa).

The protein belongs to the universal ribosomal protein uS8 family. In terms of assembly, part of the 30S ribosomal subunit. Contacts proteins S5 and S12.

Its function is as follows. One of the primary rRNA binding proteins, it binds directly to 16S rRNA central domain where it helps coordinate assembly of the platform of the 30S subunit. The protein is Small ribosomal subunit protein uS8 of Salmonella arizonae (strain ATCC BAA-731 / CDC346-86 / RSK2980).